A 269-amino-acid chain; its full sequence is Small ribosomal subunit protein uS2 (269 aa).

A disordered region spans residues 224–269 (ANQGREDSEDVYSETENDTEETDEELVSEEDLKEFVENSEEESDEE). Residues 230 to 269 (DSEDVYSETENDTEETDEELVSEEDLKEFVENSEEESDEE) are compositionally biased toward acidic residues.

Belongs to the universal ribosomal protein uS2 family.

This chain is Small ribosomal subunit protein uS2, found in Finegoldia magna (strain ATCC 29328 / DSM 20472 / WAL 2508) (Peptostreptococcus magnus).